The chain runs to 608 residues: Tectonic-3 (608 aa).

An N-terminal signal peptide occupies residues methionine 1–proline 22. Residues glutamine 23–proline 58 are disordered. The Extracellular segment spans residues glutamine 23–lysine 586. Residues glycine 45 to threonine 54 are compositionally biased toward polar residues. N-linked (GlcNAc...) asparagine glycans are attached at residues asparagine 78, asparagine 179, and asparagine 347. The helical transmembrane segment at cysteine 587–threonine 607 threads the bilayer. Residue threonine 608 is a topological domain, cytoplasmic.

This sequence belongs to the tectonic family. Part of the tectonic-like complex (also named B9 complex).

Its subcellular location is the membrane. Part of the tectonic-like complex which is required for tissue-specific ciliogenesis and may regulate ciliary membrane composition. May be involved in apoptosis regulation. Necessary for signal transduction through the sonic hedgehog (Shh) signaling pathway. The sequence is that of Tectonic-3 (TCTN3) from Macaca fascicularis (Crab-eating macaque).